Here is a 250-residue protein sequence, read N- to C-terminus: Isoprenyl transferase (250 aa).

Aspartate 27 is an active-site residue. Aspartate 27 is a binding site for Mg(2+). Substrate is bound by residues 28–31, tryptophan 32, histidine 48, and 76–78; these read GNRR and STE. Asparagine 79 acts as the Proton acceptor in catalysis. Substrate-binding positions include phenylalanine 80, arginine 82, arginine 199, and 205–207; that span reads RVS. Glutamate 218 is a binding site for Mg(2+).

This sequence belongs to the UPP synthase family. In terms of assembly, homodimer. Mg(2+) serves as cofactor.

Functionally, catalyzes the condensation of isopentenyl diphosphate (IPP) with allylic pyrophosphates generating different type of terpenoids. The sequence is that of Isoprenyl transferase from Chlamydia caviae (strain ATCC VR-813 / DSM 19441 / 03DC25 / GPIC) (Chlamydophila caviae).